Consider the following 48-residue polypeptide: uncharacterized protein (48 aa).

This is an uncharacterized protein from His1 virus (isolate Australia/Victoria) (His1V).